Consider the following 86-residue polypeptide: uncharacterized protein (86 aa).

Helical transmembrane passes span 4-24, 34-54, and 64-84; these read ILIIAEYTLLASLAVFSIAAV, MGLVGISGLNIAIATILILIN, and DIAYALVLLGPVGTIAFARVL.

The protein to M.jannaschii MJ1223.

The protein resides in the cell membrane. This is an uncharacterized protein from Methanothermobacter thermautotrophicus (strain ATCC 29096 / DSM 1053 / JCM 10044 / NBRC 100330 / Delta H) (Methanobacterium thermoautotrophicum).